Here is a 213-residue protein sequence, read N- to C-terminus: Orotate phosphoribosyltransferase (213 aa).

Lysine 26 is a binding site for 5-phospho-alpha-D-ribose 1-diphosphate. An orotate-binding site is contributed by 34-35; it reads FF. Residues 72–73, arginine 99, lysine 100, lysine 103, histidine 105, and 124–132 contribute to the 5-phospho-alpha-D-ribose 1-diphosphate site; these read YK and DDVITAGTA. Positions 128 and 156 each coordinate orotate.

Belongs to the purine/pyrimidine phosphoribosyltransferase family. PyrE subfamily. In terms of assembly, homodimer. Requires Mg(2+) as cofactor.

The enzyme catalyses orotidine 5'-phosphate + diphosphate = orotate + 5-phospho-alpha-D-ribose 1-diphosphate. It participates in pyrimidine metabolism; UMP biosynthesis via de novo pathway; UMP from orotate: step 1/2. In terms of biological role, catalyzes the transfer of a ribosyl phosphate group from 5-phosphoribose 1-diphosphate to orotate, leading to the formation of orotidine monophosphate (OMP). The sequence is that of Orotate phosphoribosyltransferase from Thioalkalivibrio sulfidiphilus (strain HL-EbGR7).